A 293-amino-acid polypeptide reads, in one-letter code: ATP synthase subunit a (293 aa).

6 consecutive transmembrane segments (helical) span residues 40–60 (DSLFWSILMGLLVVFCLWLAA), 97–117 (LFVAPLALTVFLWIILMNALD), 151–171 (DLNVPMGMSLGVLLLMFYYGI), 188–208 (FHAHGLASLVLAPFNLLLNLI), 225–245 (MFAGELIFMLIALLGGAWTGF), and 264–284 (AIFHILIVLLQAFIFMMLTLV).

This sequence belongs to the ATPase A chain family. In terms of assembly, F-type ATPases have 2 components, CF(1) - the catalytic core - and CF(0) - the membrane proton channel. CF(1) has five subunits: alpha(3), beta(3), gamma(1), delta(1), epsilon(1). CF(0) has three main subunits: a(1), b(2) and c(9-12). The alpha and beta chains form an alternating ring which encloses part of the gamma chain. CF(1) is attached to CF(0) by a central stalk formed by the gamma and epsilon chains, while a peripheral stalk is formed by the delta and b chains.

It is found in the cell inner membrane. Key component of the proton channel; it plays a direct role in the translocation of protons across the membrane. The chain is ATP synthase subunit a from Bordetella bronchiseptica (strain ATCC BAA-588 / NCTC 13252 / RB50) (Alcaligenes bronchisepticus).